The following is a 159-amino-acid chain: 17 kDa surface antigen (159 aa).

An N-terminal signal peptide occupies residues M1–A19. Residue C20 is the site of N-palmitoyl cysteine attachment. A lipid anchor (S-diacylglycerol cysteine) is attached at C20.

It belongs to the rickettsiale 17 kDa surface antigen family.

It is found in the cell outer membrane. In Rickettsia felis (strain ATCC VR-1525 / URRWXCal2) (Rickettsia azadi), this protein is 17 kDa surface antigen (omp).